The sequence spans 310 residues: Malate dehydrogenase (310 aa).

Residues 7-12 (GAGNVG) and Asp32 each bind NAD(+). Positions 81 and 87 each coordinate substrate. Residues Asn94 and 117–119 (VSN) each bind NAD(+). Residues Asn119 and Arg150 each contribute to the substrate site. Residue His174 is the Proton acceptor of the active site.

Belongs to the LDH/MDH superfamily. MDH type 3 family.

The catalysed reaction is (S)-malate + NAD(+) = oxaloacetate + NADH + H(+). Catalyzes the reversible oxidation of malate to oxaloacetate. The protein is Malate dehydrogenase of Chlorobium phaeobacteroides (strain DSM 266 / SMG 266 / 2430).